The following is a 408-amino-acid chain: Phosphopentomutase (408 aa).

Positions 10, 307, 312, 348, 349, and 360 each coordinate Mn(2+).

This sequence belongs to the phosphopentomutase family. The cofactor is Mn(2+).

Its subcellular location is the cytoplasm. It carries out the reaction 2-deoxy-alpha-D-ribose 1-phosphate = 2-deoxy-D-ribose 5-phosphate. The enzyme catalyses alpha-D-ribose 1-phosphate = D-ribose 5-phosphate. It functions in the pathway carbohydrate degradation; 2-deoxy-D-ribose 1-phosphate degradation; D-glyceraldehyde 3-phosphate and acetaldehyde from 2-deoxy-alpha-D-ribose 1-phosphate: step 1/2. Isomerase that catalyzes the conversion of deoxy-ribose 1-phosphate (dRib-1-P) and ribose 1-phosphate (Rib-1-P) to deoxy-ribose 5-phosphate (dRib-5-P) and ribose 5-phosphate (Rib-5-P), respectively. The sequence is that of Phosphopentomutase from Buchnera aphidicola subsp. Baizongia pistaciae (strain Bp).